Consider the following 1136-residue polypeptide: Pesticidal crystal protein Cry4B protoxin (1136 aa).

Residues 84–282 (TPERVWNDFM…PADKIDNTKL (199 aa)) form a domain I region. Residues 283-466 (SKTEFTREIY…SNRVSFAWTH (184 aa)) are domain II. A domain III region spans residues 467 to 641 (KIVDPNNQIY…PITQSVLDET (175 aa)).

Belongs to the delta endotoxin family. In terms of assembly, in the presence of micelles active toxin forms oligomers that can be fit into cryo-EM maps as trimers. Binds to host (A.gambiae) cadherin AgCad1 (also called BT-R3), probably on the cell surface. Activated toxin may bind its host AgCad1 receptor as a monomer, but also forms an oligomer that is not active. The cofactor is Mg(2+). In terms of processing, treatment of recombinant protein with A.aegypti 3rd instar larvae midgut extract for 1 hour yields major bands of 72 and 45 kDa, the combined proteins are toxic to mosquitoes. Longer digestion, which removes the 72 kDa protein, yields a non-toxic preparation. Proteolysis by yields a 65 kDa toxic protein and 48 and 17 kDa fragments which are not toxic. As to expression, host (A.gambiae) larval midgut; binds to host brush border membranes, probably to cadherin-AgCad1 (Cad1, also called BT-R3).

The protein localises to the spore. With respect to regulation, toxic activity on Trichoplusia ni insect cells stably transfected with the AgCad1/BT-R3 receptor leads to oncosis, cell death characterized by cell swelling, membrane blebbing and depletion of energy reserves. Cell death is blocked by EDTA (but not EGTA) and is partially prevented by pretreatment with NF449 (inhibits G-s-alpha-60A and adenylyl cyclase, AC) and 2',5'-dideoxyadenosine 3'-diphosphate (ddADP, inhibits AC), while H-89 and PKAI 14-22 (both inhibit protein kinase A), ouabain (inhibits Na+/K+-ATPase) and a cell exocytosis inhibitor (Exo1) nearly completely prevent the action of the toxin in this system. The cAMP analog pCPT-cAMP and the AC activator FSK enhance toxicity. Its function is as follows. A pesticidal protein active against Aedes and Anopheles mosquito species; activity on Culex species is strain dependent. It remains toxic to permethrin-resistant strains of A.gambiae. Following activation of the protoxin by mosquito larvae midgut extract (or by chymotrypsin or trypsin treatment) it becomes insecticidal. Causes mosquito cell death by activating a host G-protein-coupled receptor which subsequently activates adenylyl cyclase and increases cAMP production. cAMP activates protein kinase A which sets off a series of downstream events which includes increased exocytosis (probably bringing more receptor to the cell membrane), Na+/K+-ATPase activation and eventual host cell death. Another group suggests that alkaline phosphatase serves as the insect receptor and that the protein forms pores in insect cell membranes. The sequence is that of Pesticidal crystal protein Cry4B protoxin from Bacillus thuringiensis subsp. israelensis.